Reading from the N-terminus, the 342-residue chain is UDP-3-O-acylglucosamine N-acyltransferase (342 aa).

Residue His242 is the Proton acceptor of the active site.

It belongs to the transferase hexapeptide repeat family. LpxD subfamily. As to quaternary structure, homotrimer.

It carries out the reaction a UDP-3-O-[(3R)-3-hydroxyacyl]-alpha-D-glucosamine + a (3R)-hydroxyacyl-[ACP] = a UDP-2-N,3-O-bis[(3R)-3-hydroxyacyl]-alpha-D-glucosamine + holo-[ACP] + H(+). Its pathway is bacterial outer membrane biogenesis; LPS lipid A biosynthesis. Catalyzes the N-acylation of UDP-3-O-acylglucosamine using 3-hydroxyacyl-ACP as the acyl donor. Is involved in the biosynthesis of lipid A, a phosphorylated glycolipid that anchors the lipopolysaccharide to the outer membrane of the cell. The protein is UDP-3-O-acylglucosamine N-acyltransferase of Leptothrix cholodnii (strain ATCC 51168 / LMG 8142 / SP-6) (Leptothrix discophora (strain SP-6)).